A 384-amino-acid polypeptide reads, in one-letter code: Viral protein 1 (384 aa).

The chain is Viral protein 1 from Chaetoceros setoense (Chaetoceros setoense DNA virus).